Consider the following 720-residue polypeptide: Transcriptional regulator EFH1 (720 aa).

Composition is skewed to polar residues over residues 1 to 15 (MNGI…NFYN) and 22 to 35 (PSSS…SSQD). Disordered stretches follow at residues 1-111 (MNGI…SSST), 181-223 (SFQM…HQSQ), 245-336 (QKEF…TIAT), and 365-437 (YQRQ…PQPD). Positions 71-105 (QQNQSESQQSRQSHHLQQQQQQQQQQQQNQHNQQN) are enriched in low complexity. Residues 181–200 (SFQMGSVSTPDTQNSSIRSK) are compositionally biased toward polar residues. Residues 201 to 223 (QQQQHSYQQQQPQQLSQSQHQSQ) show a composition bias toward low complexity. Positions 254-266 (GDQTLVPQTNSKL) are enriched in polar residues. Residues 267-304 (QQQISETSYSQQQQQQQSPPTPQKQQQQQHYQHQTTQP) are compositionally biased toward low complexity. A compositionally biased stretch (polar residues) spans 313 to 336 (YSQTGGPSSSPVAGNISIPTTIAT). Residues 366 to 399 (QRQQQQQQQHQQPQSQQMSQISQLSQQIPPQGSS) show a composition bias toward low complexity. The span at 400–413 (KNISINSTPTKSRA) shows a compositional bias: polar residues. A compositionally biased stretch (low complexity) spans 414-433 (SSITTRSGRQSRSTSISSFI). Positions 446-552 (KVATTRWDDE…KNIKQYFLTK (107 aa)) constitute an HTH APSES-type domain. Residues 480-501 (GTKLLNVIGMTRGKRDGILKTE) constitute a DNA-binding region (H-T-H motif). Positions 569-582 (GMTRQREEVRREGR) are enriched in basic and acidic residues. The interval 569-662 (GMTRQREEVR…KNSESKLLET (94 aa)) is disordered. Residues 613 to 644 (VPGDDEEEEDDDDDDDDDEEEGEQDDEEEEDG) are compositionally biased toward acidic residues. Over residues 645-654 (SSTSMSSSKN) the composition is skewed to low complexity.

This sequence belongs to the EFG1/PHD1/stuA family.

The protein localises to the nucleus. Its function is as follows. Transcription factor that regulates filamentous growth through repression of EFG1. Regulates the level of colonizing fungi, favoring commensalism as opposed to candidiasis. The chain is Transcriptional regulator EFH1 (EFH1) from Candida albicans (strain SC5314 / ATCC MYA-2876) (Yeast).